The following is a 222-amino-acid chain: Probable elongation factor 1-beta (222 aa).

The tract at residues 90–111 is disordered; the sequence is KPAADDDDDVDLFGSDDEEDEE. A compositionally biased stretch (acidic residues) spans 94–111; sequence DDDDDVDLFGSDDEEDEE. Residue serine 104 is modified to Phosphoserine.

This sequence belongs to the EF-1-beta/EF-1-delta family. In terms of assembly, EF-1 is composed of 4 subunits: alpha, beta, beta' and gamma. Phosphorylation affects the GDP/GTP exchange rate.

Its function is as follows. EF-1-beta and EF-1-delta stimulate the exchange of GDP bound to EF-1-alpha to GTP. This Drosophila melanogaster (Fruit fly) protein is Probable elongation factor 1-beta.